An 87-amino-acid chain; its full sequence is U14-lycotoxin-Ls1b (87 aa).

An N-terminal signal peptide occupies residues 1–20 (MNSKVFAVLLLLALSTCVLS). In terms of domain architecture, WAP spans 21-66 (EKYCPTPRNTSCKKMNIRNNCCRDSDCTSNAFCCAEPCGNFCHKAS). 5 cysteine pairs are disulfide-bonded: C24–C54, C32–C58, C41–C53, C42–C80, and C47–C62.

Belongs to the venom protein 11 family. 01 (wap-1) subfamily. Post-translationally, contains 5 disulfide bonds. In terms of tissue distribution, expressed by the venom gland.

It localises to the secreted. Its function is as follows. Has antibacterial activity. This Lycosa singoriensis (Wolf spider) protein is U14-lycotoxin-Ls1b.